The primary structure comprises 323 residues: Lipoyl synthase (323 aa).

[4Fe-4S] cluster is bound by residues Cys-65, Cys-70, Cys-76, Cys-91, Cys-95, Cys-98, and Ser-304. Residues 77 to 293 (FNNGTATFMI…KKEALSIGFT (217 aa)) enclose the Radical SAM core domain.

Belongs to the radical SAM superfamily. Lipoyl synthase family. The cofactor is [4Fe-4S] cluster.

Its subcellular location is the cytoplasm. It carries out the reaction [[Fe-S] cluster scaffold protein carrying a second [4Fe-4S](2+) cluster] + N(6)-octanoyl-L-lysyl-[protein] + 2 oxidized [2Fe-2S]-[ferredoxin] + 2 S-adenosyl-L-methionine + 4 H(+) = [[Fe-S] cluster scaffold protein] + N(6)-[(R)-dihydrolipoyl]-L-lysyl-[protein] + 4 Fe(3+) + 2 hydrogen sulfide + 2 5'-deoxyadenosine + 2 L-methionine + 2 reduced [2Fe-2S]-[ferredoxin]. It functions in the pathway protein modification; protein lipoylation via endogenous pathway; protein N(6)-(lipoyl)lysine from octanoyl-[acyl-carrier-protein]: step 2/2. Its function is as follows. Catalyzes the radical-mediated insertion of two sulfur atoms into the C-6 and C-8 positions of the octanoyl moiety bound to the lipoyl domains of lipoate-dependent enzymes, thereby converting the octanoylated domains into lipoylated derivatives. In Buchnera aphidicola subsp. Acyrthosiphon pisum (strain APS) (Acyrthosiphon pisum symbiotic bacterium), this protein is Lipoyl synthase.